Reading from the N-terminus, the 1862-residue chain is Chitin synthase V (1862 aa).

The tract at residues 1 to 26 (MAMSLPQLGGAGGPHTQPSLPSLPAH) is disordered. In terms of domain architecture, Myosin motor spans 1 to 778 (MAMSLPQLGG…CWMEIAQLGE (778 aa)). N-linked (GlcNAc...) asparagine glycosylation occurs at Asn-63. An ATP-binding site is contributed by 104-111 (GESGAGKS). 5 N-linked (GlcNAc...) asparagine glycosylation sites follow: Asn-123, Asn-429, Asn-483, Asn-522, and Asn-560. The disordered stretch occupies residues 592 to 643 (TVSSKPMRAPSVMSRKTHRTGRPSTAYKRQQQEAMEELDQQSQAGESKKNAK). Positions 658-682 (LDNVQKAVTDPGTNSYFVFCLKPND) are actin-binding. Helical transmembrane passes span 884–904 (WVALVFFLTWFIPDFAIRLIG) and 923–943 (MLIWLMCAVAAFFMVGFPMLI). Residues 947–1009 (QYVYSSNELS…YAGKDISALF (63 aa)) enclose the Cytochrome b5 heme-binding domain. Residues Asn-1036, Asn-1063, and Asn-1192 are each glycosylated (N-linked (GlcNAc...) asparagine). A helical membrane pass occupies residues 1202–1222 (FILAISVMLASILVFKFLAAL). N-linked (GlcNAc...) asparagine glycans are attached at residues Asn-1459 and Asn-1565. Helical transmembrane passes span 1590–1610 (FVVFIDLLSTIVQPVIVMYIV), 1623–1643 (VPITAFLLLGAIYGLQAVIFI), and 1650–1670 (MVGWMIMYIAAIPVFSFGLPL). Asn-1771 carries N-linked (GlcNAc...) asparagine glycosylation. Residues 1804–1859 (MPSDDALLAEIRDILKTADLMTVTKKGIKQELERRFNVPLDAKRAYINSATEALLS) form the DEK-C domain.

It in the N-terminal section; belongs to the TRAFAC class myosin-kinesin ATPase superfamily. Myosin family. The protein in the C-terminal section; belongs to the chitin synthase family. Class V subfamily.

Its subcellular location is the cell membrane. It carries out the reaction [(1-&gt;4)-N-acetyl-beta-D-glucosaminyl](n) + UDP-N-acetyl-alpha-D-glucosamine = [(1-&gt;4)-N-acetyl-beta-D-glucosaminyl](n+1) + UDP + H(+). Its function is as follows. Polymerizes chitin, a structural polymer of the cell wall and septum, by transferring the sugar moiety of UDP-GlcNAc to the non-reducing end of the growing chitin polymer. ChsV and chsVb do perform additive, but not redundant, functions in septum formation. Involved in cell wall integrity and resistance to antimicrobial plant defense compounds such as the tomato phytoanticipin alpha-tomatine or H(2)O(2), and plays a crucial role in vascular colonization and pathogenicity. Also plays an important role in nuclear sorting or distribution. The polypeptide is Chitin synthase V (Fusarium oxysporum f. sp. lycopersici (strain 4287 / CBS 123668 / FGSC 9935 / NRRL 34936) (Fusarium vascular wilt of tomato)).